Reading from the N-terminus, the 453-residue chain is UDP-glycosyltransferase 79B3 (453 aa).

UDP-alpha-D-glucose is bound by residues serine 266, 325–327, 342–350, and 364–367; these read VQQ, HCGFGSMWE, and LGDQ.

This sequence belongs to the UDP-glycosyltransferase family.

This is UDP-glycosyltransferase 79B3 (UGT79B3) from Arabidopsis thaliana (Mouse-ear cress).